A 312-amino-acid polypeptide reads, in one-letter code: Phosphatidate cytidylyltransferase (312 aa).

Positions 1 to 31 (MASTDPGTGTPLDESVPGIKRAMRQSTKNTP) are disordered. 8 helical membrane passes run 37–57 (LPAAIAVGLSIGGVLVATLVF), 58–78 (APRIWVVLCAGAIFVASHEVV), 85–105 (GYVIPAIPLLIGGQFTVWLTW), 110–130 (VGALAGFGATVVVCMIWRLVM), 157–177 (ATVFLAAWVPLFASFAALLVY), 186–206 (FCLMIAVVASDVGGYTVGVLF), 223–243 (GFAGSLVCGTTATILTATFLA), and 247–267 (PWVGALLSFVLVLTCTLGDLV).

It belongs to the CDS family.

It is found in the cell membrane. The catalysed reaction is a 1,2-diacyl-sn-glycero-3-phosphate + CTP + H(+) = a CDP-1,2-diacyl-sn-glycerol + diphosphate. The protein operates within phospholipid metabolism; CDP-diacylglycerol biosynthesis; CDP-diacylglycerol from sn-glycerol 3-phosphate: step 3/3. This chain is Phosphatidate cytidylyltransferase (cdsA), found in Mycobacterium leprae (strain TN).